A 243-amino-acid chain; its full sequence is Probable heat shock transcription factor (243 aa).

The DNA-binding element occupies 9–102 (INKFIRRLYK…GDNLLPCIQR (94 aa)). Positions 121 to 164 (QLQDLLQYLNNQNFKLEGEIKSLKDRVDQQDCTINGLVQLLTRI) are involved in trimerization.

It belongs to the HSF family. Homotrimer. Homotrimerization increases the affinity of HSF1 to DNA.

It is found in the nucleus. In terms of biological role, DNA-binding transcription factor that specifically binds heat shock promoter elements (HSE) and activates transcription. The sequence is that of Probable heat shock transcription factor from Vairimorpha ceranae (strain BRL01) (Microsporidian parasite).